A 343-amino-acid polypeptide reads, in one-letter code: UPF0283 membrane protein blr7254 (343 aa).

The next 3 helical transmembrane spans lie at 64-84 (GALF…LGVV), 97-117 (LGFV…VVIG), and 214-234 (IVTA…VAAL).

Belongs to the UPF0283 family.

It is found in the cell inner membrane. The polypeptide is UPF0283 membrane protein blr7254 (Bradyrhizobium diazoefficiens (strain JCM 10833 / BCRC 13528 / IAM 13628 / NBRC 14792 / USDA 110)).